We begin with the raw amino-acid sequence, 79 residues long: Conotoxin Tr6.2 (79 aa).

Positions 1-22 (MKLTCVLIISVLFLTASQLITA) are cleaved as a signal peptide. A propeptide spanning residues 23–47 (VYSRDKQQYRAARLRDEMRNLKGAR) is cleaved from the precursor. Intrachain disulfides connect Cys-49–Cys-62, Cys-56–Cys-67, and Cys-61–Cys-77. 4-hydroxyproline is present on residues Pro-60 and Pro-63.

The protein belongs to the conotoxin O1 superfamily. As to expression, expressed by the venom duct.

The protein localises to the secreted. Functionally, ion channel inhibitor that inhibits the increase in intracellular calcium upon depolarization in DRG neurons. In vivo, both intraperitoneal and intracranial injections into mice induce hyperactivity. This is Conotoxin Tr6.2 from Conus terebra (Sea snail).